Reading from the N-terminus, the 177-residue chain is ATP synthase subunit delta (177 aa).

Belongs to the ATPase delta chain family. As to quaternary structure, F-type ATPases have 2 components, F(1) - the catalytic core - and F(0) - the membrane proton channel. F(1) has five subunits: alpha(3), beta(3), gamma(1), delta(1), epsilon(1). F(0) has three main subunits: a(1), b(2) and c(10-14). The alpha and beta chains form an alternating ring which encloses part of the gamma chain. F(1) is attached to F(0) by a central stalk formed by the gamma and epsilon chains, while a peripheral stalk is formed by the delta and b chains.

It is found in the cell inner membrane. F(1)F(0) ATP synthase produces ATP from ADP in the presence of a proton or sodium gradient. F-type ATPases consist of two structural domains, F(1) containing the extramembraneous catalytic core and F(0) containing the membrane proton channel, linked together by a central stalk and a peripheral stalk. During catalysis, ATP synthesis in the catalytic domain of F(1) is coupled via a rotary mechanism of the central stalk subunits to proton translocation. Functionally, this protein is part of the stalk that links CF(0) to CF(1). It either transmits conformational changes from CF(0) to CF(1) or is implicated in proton conduction. The polypeptide is ATP synthase subunit delta (Neisseria meningitidis serogroup C (strain 053442)).